Here is a 429-residue protein sequence, read N- to C-terminus: uncharacterized protein (429 aa).

Helical transmembrane passes span 26-46 (VALTGAAAVVVLPVITSHDIF), 51-71 (TGIDWDVIFLLVGMMIIVGVL), 99-119 (LVLVSALASALLDNVTTVLLI), 135-155 (TSFLMAEVFASNIGGAATLVG), 173-193 (FMLHLTPLVVIVLIALIAVLP), 223-243 (LLVKCGAVLVLVFAAFVAHPV), 278-298 (TLLFFAGLFIMVGALVKTGVV), 311-331 (GNIVATAFLILGVSAPISGII), 361-381 (WWALALGADFGGNLTAIGASA), and 407-427 (VVTAVSIALAAIYLWLRYFVL).

The protein belongs to the CitM (TC 2.A.11) transporter family.

It localises to the cell membrane. This is an uncharacterized protein from Mycobacterium tuberculosis (strain ATCC 25618 / H37Rv).